Here is a 229-residue protein sequence, read N- to C-terminus: Putative N-acetylmannosamine-6-phosphate 2-epimerase (229 aa).

This sequence belongs to the NanE family.

The catalysed reaction is an N-acyl-D-glucosamine 6-phosphate = an N-acyl-D-mannosamine 6-phosphate. The protein operates within amino-sugar metabolism; N-acetylneuraminate degradation; D-fructose 6-phosphate from N-acetylneuraminate: step 3/5. Functionally, converts N-acetylmannosamine-6-phosphate (ManNAc-6-P) to N-acetylglucosamine-6-phosphate (GlcNAc-6-P). This Pediococcus pentosaceus (strain ATCC 25745 / CCUG 21536 / LMG 10740 / 183-1w) protein is Putative N-acetylmannosamine-6-phosphate 2-epimerase.